Reading from the N-terminus, the 157-residue chain is Transmembrane protein 42 (157 aa).

4 consecutive transmembrane segments (helical) span residues 37 to 57 (FWGV…AAAA), 67 to 87 (IGLC…MWTF), 100 to 120 (IASV…GYLL), and 124 to 144 (CQEI…TLIH).

The protein localises to the membrane. The polypeptide is Transmembrane protein 42 (Tmem42) (Mus musculus (Mouse)).